The primary structure comprises 225 residues: Germin-like protein 8-6 (225 aa).

The signal sequence occupies residues 1 to 23 (MASPSSLCLLTALLALVSWQTIA). Cysteines 33 and 48 form a disulfide. The region spanning 63–213 (AMLDTPRKTN…AFQVEKGTID (151 aa)) is the Cupin type-1 domain. N77 carries N-linked (GlcNAc...) asparagine glycosylation. The Mn(2+) site is built by H110, H112, and E117. N-linked (GlcNAc...) asparagine glycosylation occurs at N136. Residue H158 coordinates Mn(2+).

The protein belongs to the germin family. In terms of assembly, oligomer (believed to be a pentamer but probably hexamer).

It localises to the secreted. The protein resides in the extracellular space. It is found in the apoplast. In terms of biological role, plays a role in broad-spectrum disease resistance. Probably has no oxalate oxidase activity even if the active site is conserved. This chain is Germin-like protein 8-6, found in Oryza sativa subsp. japonica (Rice).